Reading from the N-terminus, the 450-residue chain is tRNA-2-methylthio-N(6)-dimethylallyladenosine synthase (450 aa).

In terms of domain architecture, MTTase N-terminal spans 2 to 119 (KKVFVKTYGC…LPDLIARRQR (118 aa)). [4Fe-4S] cluster is bound by residues C11, C48, C82, C156, C160, and C163. The region spanning 142-375 (RVEGPSAFVS…QATIEENVQR (234 aa)) is the Radical SAM core domain. The TRAM domain occupies 378–448 (QNMVGTVQRI…PHSLRGEIVV (71 aa)).

Belongs to the methylthiotransferase family. MiaB subfamily. As to quaternary structure, monomer. [4Fe-4S] cluster is required as a cofactor.

Its subcellular location is the cytoplasm. The catalysed reaction is N(6)-dimethylallyladenosine(37) in tRNA + (sulfur carrier)-SH + AH2 + 2 S-adenosyl-L-methionine = 2-methylsulfanyl-N(6)-dimethylallyladenosine(37) in tRNA + (sulfur carrier)-H + 5'-deoxyadenosine + L-methionine + A + S-adenosyl-L-homocysteine + 2 H(+). Catalyzes the methylthiolation of N6-(dimethylallyl)adenosine (i(6)A), leading to the formation of 2-methylthio-N6-(dimethylallyl)adenosine (ms(2)i(6)A) at position 37 in tRNAs that read codons beginning with uridine. In Cupriavidus necator (strain ATCC 17699 / DSM 428 / KCTC 22496 / NCIMB 10442 / H16 / Stanier 337) (Ralstonia eutropha), this protein is tRNA-2-methylthio-N(6)-dimethylallyladenosine synthase.